A 316-amino-acid chain; its full sequence is DMOA farnesyltransferase nvfB (316 aa).

9 helical membrane-spanning segments follow: residues 47 to 67, 71 to 91, 115 to 135, 139 to 159, 162 to 182, 191 to 211, 234 to 254, 258 to 278, and 294 to 314; these read VVGVVFGAAVAPTKLPATILL, LILVLWSLFLRSAGCVWNDVI, WNAVMLTAGIFACGGSLLSFL, CAIEALIEIFFALLYPFGKRF, FPQLILVNIGWAIPMSMHSLG, PTFFMFLFIALVIVMIDVVYS, IELLSYAFFYASTGALLAAGY, LGIPFTVLSVGGHFGGFLYFL, and KLACLIASLFWVVGLFVEYYL.

The protein belongs to the UbiA prenyltransferase family.

It is found in the membrane. The enzyme catalyses 3,5-dimethylorsellinate + (2E,6E)-farnesyl diphosphate = (3R)-3-farnesyl-6-hydroxy-2,3,5-trimethyl-4-oxocyclohexa-1,5-diene-1-carboxylate + diphosphate + H(+). It participates in secondary metabolite biosynthesis; terpenoid biosynthesis. Its function is as follows. DMOA farnesyltransferase; part of the gene cluster that mediates the biosynthesis of novofumigatonin, a heavily oxygenated meroterpenoid containing a unique orthoester moiety. The first step of the pathway is the synthesis of 3,5-dimethylorsellinic acid (DMOA) by the polyketide synthase nvfA via condensation of one acetyl-CoA starter unit with 3 malonyl-CoA units and 2 methylations. DMOA is then converted to farnesyl-DMOA by the farnesyltransferase nvfB. Epoxydation by FAD-dependent monooxygenase nvfK, followed by a protonation-initiated cyclization catalyzed by the terpene cyclase nvfL leads to the production of asnavolin H. The short chain dehydrogenase nvfC then as a 3-OH dehydrogenase of asnovolin H to yield chemesin D. There are two branches to synthesize asnovolin A from chemesin D. In one branch, chemesin D undergoes Baeyer-Villiger oxidation by nvfH, methylation by nvfJ, and enoyl reduction by the nvfM D enoylreductase that reduces the double bond between C-5'and C-6', to form respectively asnovolin I, asnovolin K, and asnovolin A. In the other branch, the methylation precedes the Baeyer-Villiger oxidation and the enoyl reduction to yield asnovolin A via the asnovolin J intermediate. Asnovolin A is further converted to fumigatonoid A by the Fe(II)/2-oxoglutarate-dependent dioxygenase nvfI that catalyzes an endoperoxidation reaction. The alpha/beta hydrolase nvfD then acts as an epimerase that converts fumigatonoid A to its C-5' epimer, which then undergoes spontaneous or nvfD-catalyzed lactonization. The following step utilizes the ketoreductase nvfG to produce fumigatonoid B. The dioxygenase nvfE further converts fumigatonoid B into fumigatonoid C. Finally the Fe(II)/2-oxoglutarate-dependent dioxygenase nvfF catalyzes two rounds of oxidation to transform fumigatonoid C into the end product, novofumigatonin A. This is DMOA farnesyltransferase nvfB from Aspergillus novofumigatus (strain IBT 16806).